Here is a 671-residue protein sequence, read N- to C-terminus: Acetyl-coenzyme A synthetase 1 (671 aa).

Residues 210–213 (RGGK) and Thr329 each bind CoA. ATP is bound by residues 405–407 (GEP), 429–434 (DTYWQT), Asp520, and Arg535. CoA is bound at residue Ser543. Arg546 contacts ATP. Residue Arg605 participates in CoA binding.

This sequence belongs to the ATP-dependent AMP-binding enzyme family.

It carries out the reaction acetate + ATP + CoA = acetyl-CoA + AMP + diphosphate. This Debaryomyces hansenii (strain ATCC 36239 / CBS 767 / BCRC 21394 / JCM 1990 / NBRC 0083 / IGC 2968) (Yeast) protein is Acetyl-coenzyme A synthetase 1 (ACS1).